The following is a 227-amino-acid chain: MMLHIPGVLTKAQVAQCRELLDAAEWIDGNATSGTQSAQAKRNRQLPEGAPAARAVGDAIQDALARHPLFFSAALPLKVFPPLFNRYEGGETFGTHVDNAIRLLRGTDFRVRSDLSATLFLEEPDAYDGGELCVEDTYGTHRAKLPAGDLVLYPASSLHHVTPVTRGERVASFFWIQSMVRDDGDRTLLFQLDTQIQALSAEKGAKDPMVISLTGIYHNLLRKWADA.

Residues 78–178 form the Fe2OG dioxygenase domain; sequence KVFPPLFNRY…RVASFFWIQS (101 aa). Residues His-96, Asp-98, and His-159 each contribute to the Fe cation site. Arg-169 contributes to the 2-oxoglutarate binding site.

Requires Fe(2+) as cofactor. It depends on L-ascorbate as a cofactor.

The protein is PKHD-type hydroxylase Bcep18194_B0892 of Burkholderia lata (strain ATCC 17760 / DSM 23089 / LMG 22485 / NCIMB 9086 / R18194 / 383).